The following is a 239-amino-acid chain: DnaA regulatory inactivator Hda (239 aa).

This sequence belongs to the DnaA family. HdA subfamily. The active form seems to be an ADP-bound monomer. Forms the RIDA complex (regulatory inactivation of DnaA) of ATP-DnaA, ADP-Hda and the DNA-loaded beta sliding clamp (dnaN).

Functionally, mediates the interaction of DNA replication initiator protein DnaA with DNA polymerase subunit beta sliding clamp (dnaN). Stimulates hydrolysis of ATP-DnaA to ADP-DnaA, rendering DnaA inactive for reinitiation, a process called regulatory inhibition of DnaA or RIDA. This chain is DnaA regulatory inactivator Hda, found in Yersinia pseudotuberculosis serotype O:1b (strain IP 31758).